The following is a 57-amino-acid chain: Catalase-1 (57 aa).

Residue Tyr37 coordinates heme.

As to quaternary structure, homodimer. Heme serves as cofactor.

It carries out the reaction 2 H2O2 = O2 + 2 H2O. Functionally, decomposes hydrogen peroxide into water and oxygen; serves to protect cells from the toxic effects of hydrogen peroxide. In Comamonas terrigena, this protein is Catalase-1.